Consider the following 149-residue polypeptide: 3-hydroxyacyl-[acyl-carrier-protein] dehydratase FabZ (149 aa).

Histidine 49 is an active-site residue.

Belongs to the thioester dehydratase family. FabZ subfamily.

It is found in the cytoplasm. The catalysed reaction is a (3R)-hydroxyacyl-[ACP] = a (2E)-enoyl-[ACP] + H2O. In terms of biological role, involved in unsaturated fatty acids biosynthesis. Catalyzes the dehydration of short chain beta-hydroxyacyl-ACPs and long chain saturated and unsaturated beta-hydroxyacyl-ACPs. The chain is 3-hydroxyacyl-[acyl-carrier-protein] dehydratase FabZ from Sulfurimonas denitrificans (strain ATCC 33889 / DSM 1251) (Thiomicrospira denitrificans (strain ATCC 33889 / DSM 1251)).